A 481-amino-acid chain; its full sequence is Keratin, type II cuticular Hb1 (481 aa).

The head stretch occupies residues 1-106 (MTCGSGFCGR…PNAQCVKHEE (106 aa)). Residues 106–417 (EKEQIKCLNS…RLLEGEEQRL (312 aa)) enclose the IF rod domain. The interval 107 to 141 (KEQIKCLNSKFAAFIDKVRFLEQQNKLLETKWQFY) is coil 1A. A linker 1 region spans residues 142–151 (QNRKCCESNM). The interval 152–252 (EPLFEGYIEA…YDEETRILHS (101 aa)) is coil 1B. Residue lysine 212 forms a Glycyl lysine isopeptide (Lys-Gly) (interchain with G-Cter in SUMO1) linkage. Residues 253-269 (HISDTSIVVKMDNSRDL) form a linker 12 region. The interval 270 to 413 (NMDCVVAEIK…TTYRRLLEGE (144 aa)) is coil 2. Residues 414–481 (EQRLCEGVGA…GSAVSCGRKC (68 aa)) form a tail region.

This sequence belongs to the intermediate filament family. As to quaternary structure, heterotetramer of two type I and two type II keratins. In terms of tissue distribution, expressed in dorsal skin.

The polypeptide is Keratin, type II cuticular Hb1 (Mus musculus (Mouse)).